The primary structure comprises 468 residues: ATP synthase subunit beta 1 (468 aa).

Residue 155–162 (GGAGVGKT) coordinates ATP.

The protein belongs to the ATPase alpha/beta chains family. As to quaternary structure, F-type ATPases have 2 components, CF(1) - the catalytic core - and CF(0) - the membrane proton channel. CF(1) has five subunits: alpha(3), beta(3), gamma(1), delta(1), epsilon(1). CF(0) has three main subunits: a(1), b(2) and c(9-12). The alpha and beta chains form an alternating ring which encloses part of the gamma chain. CF(1) is attached to CF(0) by a central stalk formed by the gamma and epsilon chains, while a peripheral stalk is formed by the delta and b chains.

Its subcellular location is the cell inner membrane. The enzyme catalyses ATP + H2O + 4 H(+)(in) = ADP + phosphate + 5 H(+)(out). Its function is as follows. Produces ATP from ADP in the presence of a proton gradient across the membrane. The catalytic sites are hosted primarily by the beta subunits. The protein is ATP synthase subunit beta 1 of Syntrophotalea carbinolica (strain DSM 2380 / NBRC 103641 / GraBd1) (Pelobacter carbinolicus).